A 703-amino-acid chain; its full sequence is Elongation factor G 1 (703 aa).

In terms of domain architecture, tr-type G spans 8–291 (ERYRNIGISA…AVIDYLPSPV (284 aa)). GTP contacts are provided by residues 17 to 24 (AHIDAGKT), 88 to 92 (DTPGH), and 142 to 145 (NKMD).

This sequence belongs to the TRAFAC class translation factor GTPase superfamily. Classic translation factor GTPase family. EF-G/EF-2 subfamily.

It is found in the cytoplasm. In terms of biological role, catalyzes the GTP-dependent ribosomal translocation step during translation elongation. During this step, the ribosome changes from the pre-translocational (PRE) to the post-translocational (POST) state as the newly formed A-site-bound peptidyl-tRNA and P-site-bound deacylated tRNA move to the P and E sites, respectively. Catalyzes the coordinated movement of the two tRNA molecules, the mRNA and conformational changes in the ribosome. The sequence is that of Elongation factor G 1 from Burkholderia orbicola (strain AU 1054).